The sequence spans 103 residues: MSGRGKGGKGLGKGGAKRHRKVLRDNIQGITKPAIRRLARRGGVKRISGLIYEETRSVLKVFLENVIRDAVTYCEHAKRKTVTAMDVVYALKHQGRTLYGFGG.

Residues 1–14 (MSGRGKGGKGLGKG) are compositionally biased toward gly residues. Positions 1-20 (MSGRGKGGKGLGKGGAKRHR) are disordered. The residue at position 2 (Ser2) is an N-acetylserine. Residues Lys6 and Lys13 each carry the N6-acetyl-N6-methyllysine; alternate modification. At Lys17 the chain carries N6-acetyllysine. The DNA-binding element occupies 17–21 (KRHRK). Residue Lys21 is modified to N6-methyllysine.

It belongs to the histone H4 family. In terms of assembly, the nucleosome is a histone octamer containing two molecules each of H2A, H2B, H3 and H4 assembled in one H3-H4 heterotetramer and two H2A-H2B heterodimers. The octamer wraps approximately 147 bp of DNA.

It localises to the nucleus. Its subcellular location is the chromosome. Functionally, core component of nucleosome. Nucleosomes wrap and compact DNA into chromatin, limiting DNA accessibility to the cellular machineries which require DNA as a template. Histones thereby play a central role in transcription regulation, DNA repair, DNA replication and chromosomal stability. DNA accessibility is regulated via a complex set of post-translational modifications of histones, also called histone code, and nucleosome remodeling. The chain is Histone H4 from Ascaris suum (Pig roundworm).